A 132-amino-acid polypeptide reads, in one-letter code: Large ribosomal subunit protein uL14 (132 aa).

It belongs to the universal ribosomal protein uL14 family. As to quaternary structure, part of the 50S ribosomal subunit. Forms a cluster with proteins L3 and L24e, part of which may contact the 16S rRNA in 2 intersubunit bridges.

Functionally, binds to 23S rRNA. Forms part of two intersubunit bridges in the 70S ribosome. In Methanocaldococcus jannaschii (strain ATCC 43067 / DSM 2661 / JAL-1 / JCM 10045 / NBRC 100440) (Methanococcus jannaschii), this protein is Large ribosomal subunit protein uL14.